The primary structure comprises 117 residues: Small ribosomal subunit protein uS19c (117 aa).

Belongs to the universal ribosomal protein uS19 family.

It is found in the plastid. Its function is as follows. Protein S19 forms a complex with S13 that binds strongly to the 16S ribosomal RNA. The protein is Small ribosomal subunit protein uS19c (rps19) of Helicosporidium sp. subsp. Simulium jonesii (Green alga).